Here is a 488-residue protein sequence, read N- to C-terminus: Probable glycine dehydrogenase (decarboxylating) subunit 2 (488 aa).

An N6-(pyridoxal phosphate)lysine modification is found at Lys-274.

The protein belongs to the GcvP family. C-terminal subunit subfamily. As to quaternary structure, the glycine cleavage system is composed of four proteins: P, T, L and H. In this organism, the P 'protein' is a heterodimer of two subunits. Requires pyridoxal 5'-phosphate as cofactor.

The catalysed reaction is N(6)-[(R)-lipoyl]-L-lysyl-[glycine-cleavage complex H protein] + glycine + H(+) = N(6)-[(R)-S(8)-aminomethyldihydrolipoyl]-L-lysyl-[glycine-cleavage complex H protein] + CO2. Functionally, the glycine cleavage system catalyzes the degradation of glycine. The P protein binds the alpha-amino group of glycine through its pyridoxal phosphate cofactor; CO(2) is released and the remaining methylamine moiety is then transferred to the lipoamide cofactor of the H protein. This chain is Probable glycine dehydrogenase (decarboxylating) subunit 2, found in Listeria innocua serovar 6a (strain ATCC BAA-680 / CLIP 11262).